The sequence spans 496 residues: Probable cytosol aminopeptidase (496 aa).

2 residues coordinate Mn(2+): Lys261 and Asp266. Residue Lys273 is part of the active site. 3 residues coordinate Mn(2+): Asp284, Asp343, and Glu345. Arg347 is an active-site residue.

The protein belongs to the peptidase M17 family. It depends on Mn(2+) as a cofactor.

It is found in the cytoplasm. The enzyme catalyses Release of an N-terminal amino acid, Xaa-|-Yaa-, in which Xaa is preferably Leu, but may be other amino acids including Pro although not Arg or Lys, and Yaa may be Pro. Amino acid amides and methyl esters are also readily hydrolyzed, but rates on arylamides are exceedingly low.. It catalyses the reaction Release of an N-terminal amino acid, preferentially leucine, but not glutamic or aspartic acids.. Presumably involved in the processing and regular turnover of intracellular proteins. Catalyzes the removal of unsubstituted N-terminal amino acids from various peptides. In Bacillus licheniformis (strain ATCC 14580 / DSM 13 / JCM 2505 / CCUG 7422 / NBRC 12200 / NCIMB 9375 / NCTC 10341 / NRRL NRS-1264 / Gibson 46), this protein is Probable cytosol aminopeptidase.